The chain runs to 556 residues: Formate--tetrahydrofolate ligase 1 (556 aa).

65–72 (TPAGEGKS) provides a ligand contact to ATP.

Belongs to the formate--tetrahydrofolate ligase family.

The catalysed reaction is (6S)-5,6,7,8-tetrahydrofolate + formate + ATP = (6R)-10-formyltetrahydrofolate + ADP + phosphate. Its pathway is one-carbon metabolism; tetrahydrofolate interconversion. The sequence is that of Formate--tetrahydrofolate ligase 1 from Streptococcus pyogenes serotype M1.